The sequence spans 163 residues: 16S rRNA aminocarboxypropyltransferase (163 aa).

S-adenosyl-L-methionine is bound by residues threonine 18, isoleucine 66, leucine 87, and serine 106.

Belongs to the TDD superfamily. TSR3 family.

It localises to the cytoplasm. It catalyses the reaction an N(1)-methylpseudouridine in rRNA + S-adenosyl-L-methionine = N(1)-methyl-N(3)-[(3S)-3-amino-3-carboxypropyl]pseudouridine in rRNA + S-methyl-5'-thioadenosine + H(+). Functionally, aminocarboxypropyltransferase that catalyzes the aminocarboxypropyl transfer on pseudouridine corresponding to position 914 in M.jannaschii 16S rRNA. It constitutes the last step in biosynthesis of the hypermodified N1-methyl-N3-(3-amino-3-carboxypropyl) pseudouridine (m1acp3-Psi). This is 16S rRNA aminocarboxypropyltransferase from Thermoplasma acidophilum (strain ATCC 25905 / DSM 1728 / JCM 9062 / NBRC 15155 / AMRC-C165).